A 353-amino-acid chain; its full sequence is Colistin resistance protein EmrA (353 aa).

The chain crosses the membrane as a helical span at residues 21-41 (WGVFSVLLLFLVAGILYYFFV). Residues 132–204 (VVAAQADLAR…QASRAQLLAD (73 aa)) are a coiled coil.

This sequence belongs to the membrane fusion protein (MFP) (TC 8.A.1) family.

The protein localises to the cell inner membrane. Functionally, probably part of an efflux pump system that contributes to adaptation to osmotic stress and resistance to colistin. The sequence is that of Colistin resistance protein EmrA from Acinetobacter baumannii (strain ATCC 17978 / DSM 105126 / CIP 53.77 / LMG 1025 / NCDC KC755 / 5377).